Reading from the N-terminus, the 308-residue chain is Elongation factor Ts (308 aa).

The involved in Mg(2+) ion dislocation from EF-Tu stretch occupies residues 80–83 (TDFV).

It belongs to the EF-Ts family.

Its subcellular location is the cytoplasm. Associates with the EF-Tu.GDP complex and induces the exchange of GDP to GTP. It remains bound to the aminoacyl-tRNA.EF-Tu.GTP complex up to the GTP hydrolysis stage on the ribosome. The chain is Elongation factor Ts from Erythrobacter litoralis (strain HTCC2594).